We begin with the raw amino-acid sequence, 892 residues long: Phenylalanine--tRNA ligase beta subunit (892 aa).

One can recognise a tRNA-binding domain in the interval 39-150 (NPGVEGVVVG…PGLEPGMDVA (112 aa)). A B5 domain is found at 406–569 (AVPPVILLRT…RCEGYDAIPL (164 aa)). An insert region spans residues 442–518 (VLTPADLAAD…ALLGGGESDG (77 aa)). Mg(2+) contacts are provided by aspartate 547, aspartate 553, glutamate 556, and glutamate 557. The FDX-ACB domain maps to 799–891 (PRFPAVTRDV…ALKALGAELR (93 aa)).

It belongs to the phenylalanyl-tRNA synthetase beta subunit family. Type 1 subfamily. As to quaternary structure, tetramer of two alpha and two beta subunits. The cofactor is Mg(2+).

Its subcellular location is the cytoplasm. It catalyses the reaction tRNA(Phe) + L-phenylalanine + ATP = L-phenylalanyl-tRNA(Phe) + AMP + diphosphate + H(+). This Symbiobacterium thermophilum (strain DSM 24528 / JCM 14929 / IAM 14863 / T) protein is Phenylalanine--tRNA ligase beta subunit.